We begin with the raw amino-acid sequence, 137 residues long: ATP synthase epsilon chain (137 aa).

Belongs to the ATPase epsilon chain family. As to quaternary structure, F-type ATPases have 2 components, CF(1) - the catalytic core - and CF(0) - the membrane proton channel. CF(1) has five subunits: alpha(3), beta(3), gamma(1), delta(1), epsilon(1). CF(0) has three main subunits: a, b and c.

The protein localises to the cellular thylakoid membrane. In terms of biological role, produces ATP from ADP in the presence of a proton gradient across the membrane. This Synechococcus elongatus (strain ATCC 33912 / PCC 7942 / FACHB-805) (Anacystis nidulans R2) protein is ATP synthase epsilon chain (atpC).